We begin with the raw amino-acid sequence, 154 residues long: SsrA-binding protein (154 aa).

This sequence belongs to the SmpB family.

The protein resides in the cytoplasm. Functionally, required for rescue of stalled ribosomes mediated by trans-translation. Binds to transfer-messenger RNA (tmRNA), required for stable association of tmRNA with ribosomes. tmRNA and SmpB together mimic tRNA shape, replacing the anticodon stem-loop with SmpB. tmRNA is encoded by the ssrA gene; the 2 termini fold to resemble tRNA(Ala) and it encodes a 'tag peptide', a short internal open reading frame. During trans-translation Ala-aminoacylated tmRNA acts like a tRNA, entering the A-site of stalled ribosomes, displacing the stalled mRNA. The ribosome then switches to translate the ORF on the tmRNA; the nascent peptide is terminated with the 'tag peptide' encoded by the tmRNA and targeted for degradation. The ribosome is freed to recommence translation, which seems to be the essential function of trans-translation. This Enterococcus faecalis (strain ATCC 700802 / V583) protein is SsrA-binding protein.